We begin with the raw amino-acid sequence, 482 residues long: Auxin transporter-like protein 4 (482 aa).

Residues 1 to 59 lie on the Cytoplasmic side of the membrane; it reads MLSQNQAEEAIVTNMNETEQEGGSSLEEIAEDQSMFNFKSFLWHGGSVWDAWFSCASNQ. The chain crosses the membrane as a helical span at residues 60 to 77; it reads VAQVLLTLPYSFSQLGMV. At 78–79 the chain is on the extracellular side; the sequence is SG. Residues 80–100 traverse the membrane as a helical segment; it reads IVFQIFYGLIGSWTAYLISVL. The Cytoplasmic portion of the chain corresponds to 101 to 135; the sequence is YVEYRARKEKENVNFKNHVIQWFEVLDGLLGRYWK. Residues 136-156 form a helical membrane-spanning segment; sequence ALGLAFNCTFLLFGSVIQLIA. The Extracellular segment spans residues 157-172; the sequence is CASNIYYINDKLDKRT. The helical transmembrane segment at 173–193 threads the bilayer; it reads WTYIFGACCATTVFIPSFHNY. Residues 194 to 196 lie on the Cytoplasmic side of the membrane; sequence RIW. A helical membrane pass occupies residues 197 to 217; the sequence is SFLGLGMTTYTAWYMAIAAIV. Over 218 to 232 the chain is Extracellular; that stretch reads NGQIENVVHSGPTKL. Residues 233–253 form a helical membrane-spanning segment; the sequence is VLYFTGATNILYTFGGHAVTV. At 254–266 the chain is on the cytoplasmic side; that stretch reads EIMHAMWKPQKFK. The chain crosses the membrane as a helical span at residues 267–287; sequence YIYFLATLYVFTLTIPSAVAV. The Extracellular segment spans residues 288–314; sequence YWAFGDELLNHSNAFSLLPKNGFRDAA. Asn-297 carries N-linked (GlcNAc...) asparagine glycosylation. Residues 315–335 traverse the membrane as a helical segment; that stretch reads VILMLIHQFITFGFACTPLYF. Over 336 to 356 the chain is Cytoplasmic; that stretch reads VWEKVIGMHDTKSICLRALVR. The chain crosses the membrane as a helical span at residues 357-377; sequence LPVVIPIWFLAIIFPFFGPIN. A topological domain (extracellular) is located at residue Ser-378. The helical transmembrane segment at 379–399 threads the bilayer; that stretch reads AVGALLVTFTVYIIPALAHML. The Cytoplasmic portion of the chain corresponds to 400–422; it reads TYRTASARKNAVEKPPSFLPSWT. The helical transmembrane segment at 423–443 threads the bilayer; it reads AVYVLNAFIVVWVLVVGFGFG. The Extracellular segment spans residues 444–482; sequence GWASMTNFIRQIDTFGLFAKCYQCKPPTPPQAPSPHARH.

Belongs to the amino acid/polyamine transporter 2 family. Amino acid/auxin permease (AAAP) (TC 2.A.18.1) subfamily. In terms of tissue distribution, shoots and roots of nodulating plants, at low levels.

The protein resides in the cell membrane. In terms of biological role, carrier protein involved in proton-driven auxin influx. Mediates the formation of auxin gradient from developing leaves (site of auxin biosynthesis) to tips by contributing to the loading of auxin in vascular tissues and facilitating acropetal (base to tip) auxin transport within inner tissues of the root apex, and basipetal (tip to base) auxin transport within outer tissues of the root apex. May be involved in lateral roots and nodules formation. This is Auxin transporter-like protein 4 (LAX4) from Medicago truncatula (Barrel medic).